The chain runs to 448 residues: tRNA(Ile)-lysidine synthase (448 aa).

Residue 29–34 participates in ATP binding; the sequence is SGGVDS.

Belongs to the tRNA(Ile)-lysidine synthase family.

It is found in the cytoplasm. It carries out the reaction cytidine(34) in tRNA(Ile2) + L-lysine + ATP = lysidine(34) in tRNA(Ile2) + AMP + diphosphate + H(+). Functionally, ligates lysine onto the cytidine present at position 34 of the AUA codon-specific tRNA(Ile) that contains the anticodon CAU, in an ATP-dependent manner. Cytidine is converted to lysidine, thus changing the amino acid specificity of the tRNA from methionine to isoleucine. This is tRNA(Ile)-lysidine synthase from Azoarcus sp. (strain BH72).